Reading from the N-terminus, the 81-residue chain is Defensin-like protein 313 (81 aa).

The signal sequence occupies residues 1–32 (MESKRSSSSPLLILITTIMIIFIISGPKSVDA). 3 cysteine pairs are disulfide-bonded: Cys-34–Cys-63, Cys-45–Cys-74, and Cys-49–Cys-76.

The protein belongs to the DEFL family.

It localises to the secreted. The chain is Defensin-like protein 313 from Arabidopsis thaliana (Mouse-ear cress).